The sequence spans 159 residues: Phosphopantetheine adenylyltransferase (159 aa).

Position 10 (Thr-10) interacts with substrate. Residues 10-11 (TF) and His-18 contribute to the ATP site. Substrate-binding residues include Lys-42, Met-74, and Arg-88. ATP is bound by residues 89-91 (GLR), Glu-99, and 124-130 (WSFISSS).

The protein belongs to the bacterial CoaD family. Homohexamer. Mg(2+) is required as a cofactor.

It localises to the cytoplasm. The enzyme catalyses (R)-4'-phosphopantetheine + ATP + H(+) = 3'-dephospho-CoA + diphosphate. It functions in the pathway cofactor biosynthesis; coenzyme A biosynthesis; CoA from (R)-pantothenate: step 4/5. In terms of biological role, reversibly transfers an adenylyl group from ATP to 4'-phosphopantetheine, yielding dephospho-CoA (dPCoA) and pyrophosphate. The protein is Phosphopantetheine adenylyltransferase of Escherichia coli (strain UTI89 / UPEC).